The chain runs to 143 residues: MSSWRKAKKSEQKHRLKRIARTRVQAFARDVRISAHKARRVIDQIRGRSYVETLTLLELMPYRASYPIFKLLYSAAASASHNLGFKEADSYISKAEVNEGAVLKRLKPRARGRSYLIKKPTCHITIVLKDRTLNEMSTPTSLS.

The protein belongs to the universal ribosomal protein uL22 family. As to quaternary structure, part of the 50S ribosomal subunit.

Its subcellular location is the plastid. The protein resides in the chloroplast. Its function is as follows. This protein binds specifically to 23S rRNA. The globular domain of the protein is located near the polypeptide exit tunnel on the outside of the subunit, while an extended beta-hairpin is found that lines the wall of the exit tunnel in the center of the 70S ribosome. This Piper cenocladum (Ant piper) protein is Large ribosomal subunit protein uL22c (rpl22).